A 471-amino-acid polypeptide reads, in one-letter code: UDP-N-acetylmuramate--L-alanine ligase (471 aa).

112–118 serves as a coordination point for ATP; the sequence is GTHGKTT.

Belongs to the MurCDEF family.

The protein resides in the cytoplasm. The enzyme catalyses UDP-N-acetyl-alpha-D-muramate + L-alanine + ATP = UDP-N-acetyl-alpha-D-muramoyl-L-alanine + ADP + phosphate + H(+). The protein operates within cell wall biogenesis; peptidoglycan biosynthesis. Functionally, cell wall formation. The protein is UDP-N-acetylmuramate--L-alanine ligase of Aromatoleum aromaticum (strain DSM 19018 / LMG 30748 / EbN1) (Azoarcus sp. (strain EbN1)).